A 317-amino-acid polypeptide reads, in one-letter code: OVARIAN TUMOR DOMAIN-containing deubiquitinating enzyme 4 (317 aa).

The region spanning 168–306 is the OTU domain; sequence YSIIGIPGDG…FGHYDALLLH (139 aa). D176 is an active-site residue. C179 functions as the Nucleophile in the catalytic mechanism. Residue H299 is part of the active site.

It belongs to the peptidase C65 family.

The protein resides in the cytoplasm. It catalyses the reaction Thiol-dependent hydrolysis of ester, thioester, amide, peptide and isopeptide bonds formed by the C-terminal Gly of ubiquitin (a 76-residue protein attached to proteins as an intracellular targeting signal).. Hydrolase that can remove conjugated ubiquitin from proteins in vitro and may therefore play an important regulatory role at the level of protein turnover by preventing degradation. Cysteine protease with a preference for 'Lys-63' over 'Lys-48'-linked over 'Met-1' ubiquitin (UB) tetramers (e.g. Ub3 and Ub4) as substrates. Also cleaves RUB-GST fusion. The polypeptide is OVARIAN TUMOR DOMAIN-containing deubiquitinating enzyme 4 (Arabidopsis thaliana (Mouse-ear cress)).